The following is a 130-amino-acid chain: DNA-directed RNA polymerase subunit omega (130 aa).

The interval 110–130 (EELLKGLEGLAPPEEQPEEDE) is disordered.

The protein belongs to the RNA polymerase subunit omega family. As to quaternary structure, the RNAP catalytic core consists of 2 alpha, 1 beta, 1 beta' and 1 omega subunit. When a sigma factor is associated with the core the holoenzyme is formed, which can initiate transcription.

It carries out the reaction RNA(n) + a ribonucleoside 5'-triphosphate = RNA(n+1) + diphosphate. Its function is as follows. Promotes RNA polymerase assembly. Latches the N- and C-terminal regions of the beta' subunit thereby facilitating its interaction with the beta and alpha subunits. The polypeptide is DNA-directed RNA polymerase subunit omega (Rhodopseudomonas palustris (strain HaA2)).